A 671-amino-acid polypeptide reads, in one-letter code: DNA ligase (671 aa).

NAD(+)-binding positions include 32-36, 81-82, and Glu113; these read DAEYD and SL. The active-site N6-AMP-lysine intermediate is the Lys115. Residues Arg136, Glu173, Lys290, and Lys314 each contribute to the NAD(+) site. Zn(2+)-binding residues include Cys408, Cys411, Cys426, and Cys432. The BRCT domain occupies 593-671; that stretch reads EIDSPFAGKT…EAEMIRLLGA (79 aa).

Belongs to the NAD-dependent DNA ligase family. LigA subfamily. Mg(2+) serves as cofactor. Mn(2+) is required as a cofactor.

It carries out the reaction NAD(+) + (deoxyribonucleotide)n-3'-hydroxyl + 5'-phospho-(deoxyribonucleotide)m = (deoxyribonucleotide)n+m + AMP + beta-nicotinamide D-nucleotide.. Functionally, DNA ligase that catalyzes the formation of phosphodiester linkages between 5'-phosphoryl and 3'-hydroxyl groups in double-stranded DNA using NAD as a coenzyme and as the energy source for the reaction. It is essential for DNA replication and repair of damaged DNA. This chain is DNA ligase, found in Salmonella typhimurium (strain LT2 / SGSC1412 / ATCC 700720).